A 456-amino-acid chain; its full sequence is Bifunctional protein GlmU (456 aa).

The pyrophosphorylase stretch occupies residues 1–229 (MLNNAMSVVI…LSEVEGVNNR (229 aa)). Residues 11–14 (LAAG), K25, Q76, 81–82 (GT), 103–105 (YGD), G140, E154, N169, and N227 each bind UDP-N-acetyl-alpha-D-glucosamine. D105 serves as a coordination point for Mg(2+). N227 lines the Mg(2+) pocket. Residues 230–250 (LQLSRLERVYQSEQAEKLLLA) form a linker region. Residues 251-456 (GVMLRDPARF…EGWRRPVKKK (206 aa)) form an N-acetyltransferase region. UDP-N-acetyl-alpha-D-glucosamine-binding residues include R333 and K351. Residue H363 is the Proton acceptor of the active site. Positions 366 and 377 each coordinate UDP-N-acetyl-alpha-D-glucosamine. Residues A380, 386-387 (NY), S405, A423, and R440 each bind acetyl-CoA.

It in the N-terminal section; belongs to the N-acetylglucosamine-1-phosphate uridyltransferase family. In the C-terminal section; belongs to the transferase hexapeptide repeat family. As to quaternary structure, homotrimer. Mg(2+) is required as a cofactor.

Its subcellular location is the cytoplasm. The enzyme catalyses alpha-D-glucosamine 1-phosphate + acetyl-CoA = N-acetyl-alpha-D-glucosamine 1-phosphate + CoA + H(+). It carries out the reaction N-acetyl-alpha-D-glucosamine 1-phosphate + UTP + H(+) = UDP-N-acetyl-alpha-D-glucosamine + diphosphate. The protein operates within nucleotide-sugar biosynthesis; UDP-N-acetyl-alpha-D-glucosamine biosynthesis; N-acetyl-alpha-D-glucosamine 1-phosphate from alpha-D-glucosamine 6-phosphate (route II): step 2/2. It participates in nucleotide-sugar biosynthesis; UDP-N-acetyl-alpha-D-glucosamine biosynthesis; UDP-N-acetyl-alpha-D-glucosamine from N-acetyl-alpha-D-glucosamine 1-phosphate: step 1/1. Its pathway is bacterial outer membrane biogenesis; LPS lipid A biosynthesis. In terms of biological role, catalyzes the last two sequential reactions in the de novo biosynthetic pathway for UDP-N-acetylglucosamine (UDP-GlcNAc). The C-terminal domain catalyzes the transfer of acetyl group from acetyl coenzyme A to glucosamine-1-phosphate (GlcN-1-P) to produce N-acetylglucosamine-1-phosphate (GlcNAc-1-P), which is converted into UDP-GlcNAc by the transfer of uridine 5-monophosphate (from uridine 5-triphosphate), a reaction catalyzed by the N-terminal domain. This chain is Bifunctional protein GlmU, found in Escherichia coli (strain 55989 / EAEC).